The sequence spans 1373 residues: Disease resistance protein RRS1 (1373 aa).

In terms of domain architecture, TIR spans E5–H146. The 252-residue stretch at I170–H421 folds into the NB-ARC domain. Residue G179–T186 coordinates ATP. LRR repeat units follow at residues S498 to N522, N535 to P553, N554 to P575, H577 to L598, A621 to R646, P665 to P688, L742 to G766, P768 to I793, and P831 to L854. The short motif at R988–D1005 is the Nuclear localization signal element. The WRKY DNA-binding region spans I1204 to P1272. The disordered stretch occupies residues R1300 to A1323.

As to quaternary structure, interacts with PopP2, a R.solanacearum type III effector.

It is found in the nucleus. Functionally, transcription factor. Interacts specifically with the W box (5'-(T)TGAC[CT]-3'), a frequently occurring elicitor-responsive cis-acting element. Also acts as a disease resistance protein involved in resistance to fungal and bacterial pathogens, including R.solanacearum, P.syringae pv. tomato and C.higginsianum. In presence of RPS4, elicites an EDS1-dependent hypersensitive response. This chain is Disease resistance protein RRS1, found in Arabidopsis thaliana (Mouse-ear cress).